Here is a 492-residue protein sequence, read N- to C-terminus: Bifunctional purine biosynthesis protein PurH (492 aa).

The region spanning 1–144 is the MGS-like domain; sequence MKKAILSVSN…KNYKHVTTIV (144 aa).

This sequence belongs to the PurH family.

The catalysed reaction is (6R)-10-formyltetrahydrofolate + 5-amino-1-(5-phospho-beta-D-ribosyl)imidazole-4-carboxamide = 5-formamido-1-(5-phospho-D-ribosyl)imidazole-4-carboxamide + (6S)-5,6,7,8-tetrahydrofolate. It carries out the reaction IMP + H2O = 5-formamido-1-(5-phospho-D-ribosyl)imidazole-4-carboxamide. Its pathway is purine metabolism; IMP biosynthesis via de novo pathway; 5-formamido-1-(5-phospho-D-ribosyl)imidazole-4-carboxamide from 5-amino-1-(5-phospho-D-ribosyl)imidazole-4-carboxamide (10-formyl THF route): step 1/1. It functions in the pathway purine metabolism; IMP biosynthesis via de novo pathway; IMP from 5-formamido-1-(5-phospho-D-ribosyl)imidazole-4-carboxamide: step 1/1. This is Bifunctional purine biosynthesis protein PurH from Staphylococcus aureus (strain USA300).